Consider the following 486-residue polypeptide: Uridine/cytidine kinase UKL1, chloroplastic (486 aa).

A chloroplast-targeting transit peptide spans 1–47 (MPEDSSSLDYAMEKASGPHFSGLRFDGLLSSSPPNSSVVSSLRSAVS). Residues 31 to 54 (SSPPNSSVVSSLRSAVSSSSPSSS) show a composition bias toward low complexity. The disordered stretch occupies residues 31–67 (SSPPNSSVVSSLRSAVSSSSPSSSDPEAPKQPFIIGV). Residues 59–264 (PKQPFIIGVS…ITQHIHTKLG (206 aa)) are uridine kinase. The uracil phosphoribosyltransferase stretch occupies residues 274-486 (NVYVIQSTFQ…RYFGTDEEDQ (213 aa)). Residues lysine 298, arginine 307, and 341–344 (CKKL) each bind GTP. The 5-phospho-alpha-D-ribose 1-diphosphate site is built by arginine 351 and arginine 376. GTP is bound at residue arginine 396. Residues aspartate 402, 407 to 410 (TGNS), and glutamate 473 each bind 5-phospho-alpha-D-ribose 1-diphosphate. 472 to 474 (GEF) provides a ligand contact to uracil.

It in the N-terminal section; belongs to the uridine kinase family. The protein in the C-terminal section; belongs to the UPRTase family. In terms of tissue distribution, expressed in roots, leaves and stems.

Its subcellular location is the plastid. It is found in the chloroplast. The protein resides in the cytoplasm. The catalysed reaction is cytidine + ATP = CMP + ADP + H(+). The enzyme catalyses uridine + ATP = UMP + ADP + H(+). Its pathway is pyrimidine metabolism; CTP biosynthesis via salvage pathway; CTP from cytidine: step 1/3. The protein operates within pyrimidine metabolism; UMP biosynthesis via salvage pathway; UMP from uridine: step 1/1. In terms of biological role, involved in the pyrimidine salvage pathway. Phosphorylates uridine to uridine monophosphate (UMP). Phosphorylates cytidine to cytidine monophosphate (CMP). Does not possess uracil phosphoribosyltransferase (UPRTase) activity that catalyzes the conversion of uracil and 5-phospho-alpha-D-ribose 1-diphosphate (PRPP) to UMP and diphosphate. The sequence is that of Uridine/cytidine kinase UKL1, chloroplastic from Arabidopsis thaliana (Mouse-ear cress).